A 466-amino-acid chain; its full sequence is Muscarinic acetylcholine receptor M2 (466 aa).

Over 1–22 (MNNSTNSSNNSLALTSPYKTFE) the chain is Extracellular. Residues N2, N3, N6, and N9 are each glycosylated (N-linked (GlcNAc...) asparagine). A helical transmembrane segment spans residues 23-45 (VVFIVLVAGSLSLVTIIGNILVM). At 46–59 (VSIKVNRHLQTVNN) the chain is on the cytoplasmic side. A helical membrane pass occupies residues 60–80 (YFLFSLACADLIIGVFSMNLY). The Extracellular segment spans residues 81-97 (TLYTVIGYWPLGPVVCD). C96 and C176 are disulfide-bonded. The chain crosses the membrane as a helical span at residues 98 to 119 (LWLALDYVVSNASVMNLLIISF). The Important for signaling motif lies at 120–122 (DRY). Topologically, residues 120 to 139 (DRYFCVTKPLTYPVKRTTKM) are cytoplasmic. A helical transmembrane segment spans residues 140–162 (AGMMIAAAWVLSFILWAPAILFW). Residues 163–184 (QFIVGVRTVEDGECYIQFFSNA) lie on the Extracellular side of the membrane. A helical transmembrane segment spans residues 185–209 (AVTFGTAIAAFYLPVIIMTVLYWHI). Residues 210 to 387 (SRASKSRIKK…PPSREKKVTR (178 aa)) lie on the Cytoplasmic side of the membrane. The tract at residues 218-355 (KKDKKEPVAN…VVGSSGQNGD (138 aa)) is disordered. S232 carries the post-translational modification Phosphoserine. Residues 254 to 270 (GLEHNKIQNGKAPRDPV) are compositionally biased toward basic and acidic residues. Composition is skewed to polar residues over residues 284–293 (NDSTSVSAVA), 304–313 (DENTVSTSLG), and 334–353 (SDSC…SGQN). Residues 388-410 (TILAILLAFIITWAPYNVMVLIN) traverse the membrane as a helical segment. Residues 411–418 (TFCAPCIP) lie on the Extracellular side of the membrane. Cysteines 413 and 416 form a disulfide. A helical transmembrane segment spans residues 419–442 (NTVWTIGYWLCYINSTINPACYAL). The Important for signaling motif lies at 436–440 (NPACY). Residues 443 to 466 (CNATFKKTFKHLLMCHYKNIGATR) are Cytoplasmic-facing. 3 positions are modified to phosphothreonine: T446, T450, and T465.

Belongs to the G-protein coupled receptor 1 family. Muscarinic acetylcholine receptor subfamily. CHRM2 sub-subfamily. As to quaternary structure, interacts with ARRB1 and ARRB2. Interacts with RACK1; the interaction regulates CHRM2 internalization. Phosphorylated in response to agonist treatment.

Its subcellular location is the cell membrane. It is found in the postsynaptic cell membrane. The muscarinic acetylcholine receptor mediates various cellular responses, including inhibition of adenylate cyclase, breakdown of phosphoinositides and modulation of potassium channels through the action of G proteins. Primary transducing effect is adenylate cyclase inhibition. Signaling promotes phospholipase C activity, leading to the release of inositol trisphosphate (IP3); this then triggers calcium ion release into the cytosol. This is Muscarinic acetylcholine receptor M2 (CHRM2) from Homo sapiens (Human).